The sequence spans 398 residues: 1-deoxy-D-xylulose 5-phosphate reductoisomerase (398 aa).

NADPH is bound by residues threonine 11, glycine 12, serine 13, isoleucine 14, and asparagine 125. A 1-deoxy-D-xylulose 5-phosphate-binding site is contributed by lysine 126. Glutamate 127 is a binding site for NADPH. Aspartate 151 lines the Mn(2+) pocket. The 1-deoxy-D-xylulose 5-phosphate site is built by serine 152, glutamate 153, serine 186, and histidine 209. Residue glutamate 153 coordinates Mn(2+). Position 215 (glycine 215) interacts with NADPH. Residues serine 222, asparagine 227, lysine 228, and glutamate 231 each coordinate 1-deoxy-D-xylulose 5-phosphate. Glutamate 231 contributes to the Mn(2+) binding site.

Belongs to the DXR family. Mg(2+) is required as a cofactor. Mn(2+) serves as cofactor.

It carries out the reaction 2-C-methyl-D-erythritol 4-phosphate + NADP(+) = 1-deoxy-D-xylulose 5-phosphate + NADPH + H(+). It participates in isoprenoid biosynthesis; isopentenyl diphosphate biosynthesis via DXP pathway; isopentenyl diphosphate from 1-deoxy-D-xylulose 5-phosphate: step 1/6. Catalyzes the NADPH-dependent rearrangement and reduction of 1-deoxy-D-xylulose-5-phosphate (DXP) to 2-C-methyl-D-erythritol 4-phosphate (MEP). The sequence is that of 1-deoxy-D-xylulose 5-phosphate reductoisomerase from Acinetobacter baumannii (strain ACICU).